Here is a 462-residue protein sequence, read N- to C-terminus: Glycine--tRNA ligase (462 aa).

Residues Arg100 and Glu174 each contribute to the substrate site. ATP-binding positions include Arg206–Glu208, Phe216–Phe221, Glu290–Leu291, and Gly334–Arg337. Position 221–225 (Phe221–Glu225) interacts with substrate. Substrate is bound at residue Glu330 to Gly334.

It belongs to the class-II aminoacyl-tRNA synthetase family. Homodimer.

It localises to the cytoplasm. The catalysed reaction is tRNA(Gly) + glycine + ATP = glycyl-tRNA(Gly) + AMP + diphosphate. Functionally, catalyzes the attachment of glycine to tRNA(Gly). The protein is Glycine--tRNA ligase of Ruminiclostridium cellulolyticum (strain ATCC 35319 / DSM 5812 / JCM 6584 / H10) (Clostridium cellulolyticum).